We begin with the raw amino-acid sequence, 342 residues long: UDP-N-acetylglucosamine--N-acetylmuramyl-(pentapeptide) pyrophosphoryl-undecaprenol N-acetylglucosamine transferase (342 aa).

UDP-N-acetyl-alpha-D-glucosamine-binding positions include 10 to 12 (TGG), N124, S177, and Q275.

Belongs to the glycosyltransferase 28 family. MurG subfamily.

Its subcellular location is the cell inner membrane. The catalysed reaction is di-trans,octa-cis-undecaprenyl diphospho-N-acetyl-alpha-D-muramoyl-L-alanyl-D-glutamyl-meso-2,6-diaminopimeloyl-D-alanyl-D-alanine + UDP-N-acetyl-alpha-D-glucosamine = di-trans,octa-cis-undecaprenyl diphospho-[N-acetyl-alpha-D-glucosaminyl-(1-&gt;4)]-N-acetyl-alpha-D-muramoyl-L-alanyl-D-glutamyl-meso-2,6-diaminopimeloyl-D-alanyl-D-alanine + UDP + H(+). It participates in cell wall biogenesis; peptidoglycan biosynthesis. Functionally, cell wall formation. Catalyzes the transfer of a GlcNAc subunit on undecaprenyl-pyrophosphoryl-MurNAc-pentapeptide (lipid intermediate I) to form undecaprenyl-pyrophosphoryl-MurNAc-(pentapeptide)GlcNAc (lipid intermediate II). This chain is UDP-N-acetylglucosamine--N-acetylmuramyl-(pentapeptide) pyrophosphoryl-undecaprenol N-acetylglucosamine transferase, found in Campylobacter jejuni subsp. jejuni serotype O:6 (strain 81116 / NCTC 11828).